We begin with the raw amino-acid sequence, 197 residues long: TM2 domain-containing protein 1 (197 aa).

Residues Met-1–Gly-32 form the signal peptide. At Asn-33–Asn-105 the chain is on the extracellular side. Residues Asn-77, Asn-84, Asn-98, and Asn-105 are each glycosylated (N-linked (GlcNAc...) asparagine). Residues Val-106 to Ala-126 traverse the membrane as a helical segment. Residues Gly-108–Phe-155 form the TM2 domain. Residues Asp-127–Thr-143 lie on the Cytoplasmic side of the membrane. A helical membrane pass occupies residues Val-144 to Gly-164. Residues Pro-165–Pro-197 are Extracellular-facing. Asn-187 carries an N-linked (GlcNAc...) asparagine glycan.

The protein belongs to the TM2 family.

The protein localises to the membrane. This Danio rerio (Zebrafish) protein is TM2 domain-containing protein 1 (tm2d1).